A 192-amino-acid chain; its full sequence is Cytochrome b-245 light chain (192 aa).

Residues 2–7 are Cytoplasmic-facing; it reads GQIEWA. Residues 8 to 30 form a helical membrane-spanning segment; sequence MWANEQALASGLILITGGIVATA. Over 31–35 the chain is Extracellular; sequence GRFTQ. Residues 36 to 53 form a helical membrane-spanning segment; that stretch reads WYFGAYSIVAGVLICLLE. At 54–69 the chain is on the cytoplasmic side; it reads YPRGKRKKGSTMERCG. An intramembrane segment occupies 70–80; that stretch reads QKYLTAVVKLF. Over 81–86 the chain is Cytoplasmic; that stretch reads GPLTRN. A helical membrane pass occupies residues 87 to 104; that stretch reads YYVRAVLHLLLSVPAGFL. Leu105 is a topological domain (extracellular). Residues 106–126 traverse the membrane as a helical segment; it reads ATILGTVCLAIASVIYLLAAI. At 127 to 192 the chain is on the cytoplasmic side; it reads RGEQWTPIEP…NPIPVTDEVV (66 aa). The interval 134-192 is disordered; the sequence is IEPKPKERPQVGGTIKQPPTNPPPRPPAEVRKKPSEAEEEAASAGGPQVNPIPVTDEVV. Thr147 is modified (phosphothreonine). Lys149 is covalently cross-linked (Glycyl lysine isopeptide (Lys-Gly) (interchain with G-Cter in ubiquitin)). Phosphoserine is present on residues Ser168 and Ser176.

Belongs to the p22phox family. Component of the phagocyte NADPH oxidase core complex/cytochrome b558 complex, composed of CYBB (heavy chain (beta)) and CYBA (light chain (alpha)). Component of the phagocyte NADPH oxidase complex composed of an obligatory core heterodimer formed by the membrane proteins CYBA and CYBB and the cytosolic regulatory subunits NCF1/p47-phox, NCF2/p67-phox, NCF4/p40-phox and the small GTPase RAC1 or RAC2. Interacts with NCF1 (via SH3 domain). Interacts with SH3PXD2A. Interacts with DUOX1, DUOX2 and TPO. Interacts with NOX4; this interaction mediates superoxide generation. Interacts with calprotectin (S100A8/9). Interacts with GBP7. Interacts with NOXO1. Forms a heterodimer with NOX3 and is essential for activity and cell membrane localization of NOX3. Interacts with NOX1. Phosphorylation at Thr-147 enhances NADPH oxidase activity by promoting NCF1/p47-phox binding. Post-translationally, ubiquitinated at Lys-149 likely by RNF145. As to expression, expressed to a relatively high level in kidney, spleen, thymus and lung, and to a lower level in aorta, adrenals, and heart. Expression is not detected in liver or brain.

It localises to the cell membrane. Subunit of NADPH oxidase complexes that is required for the NADPH oxidase activity that generates, in various cell types, superoxide from molecular oxygen utilizing NADPH as an electron donor. Subunit of the phagocyte NADPH oxidase complex that mediates the transfer of electrons from cytosolic NADPH to O2 to produce the superoxide anion (O2(-)). In the activated complex, electrons are first transferred from NADPH to flavin adenine dinucleotide (FAD) and subsequently transferred via two heme molecules to molecular oxygen, producing superoxide through an outer-sphere reaction. Activation of the NADPH oxidase complex is initiated by the assembly of cytosolic subunits of the NADPH oxidase complex with the core NADPH oxidase complex to form a complex at the plasma membrane or phagosomal membrane. This activation process is initiated by phosphorylation dependent binding of the cytosolic NCF1/p47-phox subunit to the C-terminus of CYBA/p22-phox. Aassociates with NOX3 to form a functional NADPH oxidase constitutively generating superoxide. This chain is Cytochrome b-245 light chain, found in Rattus norvegicus (Rat).